Consider the following 288-residue polypeptide: MPVFAQVAHEIDIFFSFSWRDWSASIIPGSIFAVGAMRGLTLPLTTLVARYIFLVTWLTPYIYFFTLLNQVTSVDEDMINKPNRPIPSGKVTLQGAQRRSIAAFSVFLGVALYEPSLLPETLCWISTTAFLCLTSYGNHWFGKNCIAMATGAWALLSASWKAISPSTPTSDTRIYAMCGWAALTTHIQDLRDVKGDAAVGRMTLPLVFGDMGSRFIITFLALPAACCILSLGGIFQLSPITLGSLHAILGHRVLRQAGSRYDHKTYMFYTYIFCFILMLSSMDSHGLI.

6 consecutive transmembrane segments (helical) span residues 24–44 (ASIIPGSIFAVGAMRGLTLPL), 51–71 (YIFLVTWLTPYIYFFTLLNQV), 101–121 (IAAFSVFLGVALYEPSLLPET), 145–165 (CIAMATGAWALLSASWKAISP), 215–235 (FIITFLALPAACCILSLGGIF), and 268–288 (FYTYIFCFILMLSSMDSHGLI).

The protein belongs to the UbiA prenyltransferase family. It depends on Mg(2+) as a cofactor.

It localises to the membrane. Polyprenyl transferase; part of the gene cluster that mediates the biosynthesis of erinacines, cyathane-xylosides that show unique biological activities, including leishmanicidal activity, stimulating activity for nerve growth-factor synthesis, and agonistic activity toward the kappa opioid receptor. The role of eriF within the pathway has still to be determined. The first step of the erinacines biosynthesis pathway is catalyzed by the geranylgeranyl diphosphate (GGPP) synthase eriE via conversion of farnesyl pyrophosphate and isopentyl pyrophosphate into geranylgeranyl pyrophosphate (GGPP). GGPP is then substrate of the diterpene cyclase eriG for the production of cyatha-3,12-diene. The cytochrome P450 monooxygenase eriI then hydroxylates cyatha-3,12-diene at C-14 of the seven-membered ring to produce erinacol, which is further hydroxylated at C-15 by the cytochrome P450 monooxygenase eriC to yield cyathadiol. The cytochrome P450 monooxygenase eriA then catalyzes C-11 hydroxylation in the presence of the short chain dehydrogenase/reductase (SDR) eriH, which leads to the production of cyathatriol. The acetyltransferase eriL converts cyathatriol into 11-O-acetyl-cyathatriol. The SDR eriH catalyzes further oxidation of 11-O-acetyl-cyathatriol into 1-O-acetylcyathin A3. Finally, the glycosyl transferase eriJ tranfers xylose from UDP-xylose onto C-14 of 11-O-acetyl-cyathatriol to form eracine Q. EriJ is also able to convert 11-O-acetyl-cyathatriol to eracine Q2 by using UDP-D-glucose as cosubstrate, but at a lower rate. The chain is Polyprenyl transferase eriF from Hericium erinaceus (Lion's mane mushroom).